A 106-amino-acid chain; its full sequence is Large ribosomal subunit protein uL23 (106 aa).

The protein belongs to the universal ribosomal protein uL23 family. In terms of assembly, part of the 50S ribosomal subunit. Contacts protein L29, and trigger factor when it is bound to the ribosome.

Its function is as follows. One of the early assembly proteins it binds 23S rRNA. One of the proteins that surrounds the polypeptide exit tunnel on the outside of the ribosome. Forms the main docking site for trigger factor binding to the ribosome. In Neisseria gonorrhoeae (strain ATCC 700825 / FA 1090), this protein is Large ribosomal subunit protein uL23.